Consider the following 211-residue polypeptide: Ribonuclease T (211 aa).

Positions 24 to 198 (VVVDVETGGF…YDAEKTAHLF (175 aa)) constitute an Exonuclease domain. Residues Asp-27, Glu-29, His-185, and Asp-190 each coordinate Mg(2+). His-185 functions as the Proton donor/acceptor in the catalytic mechanism.

Belongs to the RNase T family. Homodimer. It depends on Mg(2+) as a cofactor.

Trims short 3' overhangs of a variety of RNA species, leaving a one or two nucleotide 3' overhang. Responsible for the end-turnover of tRNA: specifically removes the terminal AMP residue from uncharged tRNA (tRNA-C-C-A). Also appears to be involved in tRNA biosynthesis. The sequence is that of Ribonuclease T from Xylella fastidiosa (strain Temecula1 / ATCC 700964).